The following is a 207-amino-acid chain: Transcription factor DYT1 (207 aa).

Positions 1 to 38 (MGGGSRFQEPVRMSRRKQVTKEKEEDENFKSPNLEAER) are disordered. The bHLH domain occupies 28–77 (NFKSPNLEAERRRREKLHCRLMALRSHVPIVTNMTKASIVEDAITYIGEL).

In terms of assembly, homodimer. In terms of tissue distribution, mostly expressed in anthers, and, to a lower extent, in young inflorescences undergoing meiosis and siliques.

It localises to the nucleus. Transcription factor. Involved in the control of tapetum development. Required for male fertility and pollen differentiation, especially during callose deposition. The chain is Transcription factor DYT1 from Arabidopsis thaliana (Mouse-ear cress).